Consider the following 483-residue polypeptide: MLLLMFALLQDGELRKAEILSIRQRKDGPSFYVHYVDFNKRLDEWIDASRLDLSHEVEWPQPEKPEKKKTGVGNKAPSKNAQKRARADSRDVSATPDLLTGKNVNVGKAQRPSKAGGKENRDGTPLSMPIVTAEAISTDGTPKAESDDVEMVDVSFTDGKSIKEEERALGLMSREEEIERLRTSGSMTQNPTEIHRVRNLNRLQMGKYDIEPWYFSPYPASFSDADIIYIDEFCLSYFDDKRAFERHRTKCTLVHPPGNEIYRDDYISFFEVDGRRQRTWCRNLCLLSKLFLDHKTLYYDVDPFLFYCMCTRDETGCHLVGYFSKEKDSAEGYNLACILTLPQYQRRGFGRLLISFSYELSKREGKLGSPEKPLSDLGLLGYRQYWRETLVEILMEPGRETVSENELALLTSMTEKDVHETLVVLNMLRYYKGNWVIVLTDYVVEQHKKRLEKEKLKGARKIDPARLQWKPPVFTASSRTWNW.

The Tudor-knot domain maps to 10-53; that stretch reads QDGELRKAEILSIRQRKDGPSFYVHYVDFNKRLDEWIDASRLDL. The span at 57–69 shows a compositional bias: basic and acidic residues; sequence VEWPQPEKPEKKK. The disordered stretch occupies residues 57 to 127; sequence VEWPQPEKPE…KENRDGTPLS (71 aa). The MYST-type HAT domain occupies 195–471; it reads HRVRNLNRLQ…IDPARLQWKP (277 aa). The C2HC MYST-type; degenerate zinc finger occupies 228–253; it reads IYIDEFCLSYFDDKRAFERHRTKCTL. The ESA1-RPD3 motif motif lies at 278–299; the sequence is RTWCRNLCLLSKLFLDHKTLYY. N6-acetyllysine; by autocatalysis is present on lysine 295. Residues 336–340 and 345–351 each bind acetyl-CoA; these read ACILT and QRRGFGR. Glutamate 371 serves as the catalytic Proton donor/acceptor. Serine 375 provides a ligand contact to acetyl-CoA.

This sequence belongs to the MYST (SAS/MOZ) family. Component of the NuA4 histone acetyltransferase complex. In terms of processing, autoacetylation at Lys-295 is required for proper function.

The protein localises to the nucleus. It localises to the chromosome. It carries out the reaction L-lysyl-[histone] + acetyl-CoA = N(6)-acetyl-L-lysyl-[histone] + CoA + H(+). The enzyme catalyses L-lysyl-[protein] + acetyl-CoA = N(6)-acetyl-L-lysyl-[protein] + CoA + H(+). The catalysed reaction is 2-hydroxyisobutanoyl-CoA + L-lysyl-[protein] = N(6)-(2-hydroxyisobutanoyl)-L-lysyl-[protein] + CoA + H(+). It catalyses the reaction (2E)-butenoyl-CoA + L-lysyl-[protein] = N(6)-(2E)-butenoyl-L-lysyl-[protein] + CoA + H(+). Its function is as follows. Catalytic component of the NuA4 histone acetyltransferase (HAT) complex which is involved in epigenetic transcriptional activation of selected genes principally by acetylation of nucleosomal histones H4, H3, H2B, H2A and H2A variant H2A.Z. Acetylates histone H4 to form H4K5ac, H4K8ac, H4K12ac and H4K16ac, histone H3 to form H3K14ac, and histone H2A to form H2AK4ac and H2AK7ac. The NuA4 complex is involved in the DNA damage response and is required for chromosome segregation. The NuA4 complex plays a direct role in repair of DNA double-strand breaks (DSBs) through homologous recombination. Recruitment to promoters depends on H3K4me. Also acetylates non-histone proteins. In addition to protein acetyltransferase, can use different acyl-CoA substrates, such as 2-hydroxyisobutanoyl-CoA (2-hydroxyisobutyryl-CoA) or (2E)-butenoyl-CoA (crotonyl-CoA), and is able to mediate protein 2-hydroxyisobutyrylation and crotonylation, respectively. The polypeptide is Histone acetyltransferase esa1 (esa1) (Aspergillus fumigatus (strain ATCC MYA-4609 / CBS 101355 / FGSC A1100 / Af293) (Neosartorya fumigata)).